A 397-amino-acid chain; its full sequence is ATP-dependent RNA helicase eIF4A (397 aa).

The Q motif signature appears at 23-51; that stretch reads YKFDDLNLKPNIVRGIFGYGYETPSAIQQ. One can recognise a Helicase ATP-binding domain in the interval 54 to 224; that stretch reads ILPITEGRDV…TKFMNNPVRI (171 aa). 67–74 contributes to the ATP binding site; it reads AQSGTGKT. Residues 172-175 carry the DEAD box motif; that stretch reads DEAD. Residues 255 to 396 enclose the Helicase C-terminal domain; it reads DLYDSISVTQ…EMPADIGSLF (142 aa).

This sequence belongs to the DEAD box helicase family. eIF4A subfamily. Component of the eIF4F complex, which composition varies with external and internal environmental conditions. It is composed of at least eIF4A, eIF4E and eIF4G.

The protein resides in the cytoplasm. It catalyses the reaction ATP + H2O = ADP + phosphate + H(+). In terms of biological role, ATP-dependent RNA helicase which is a subunit of the eIF4F complex involved in cap recognition and is required for mRNA binding to ribosome. In the current model of translation initiation, eIF4A unwinds RNA secondary structures in the 5'-UTR of mRNAs which is necessary to allow efficient binding of the small ribosomal subunit, and subsequent scanning for the initiator codon. The sequence is that of ATP-dependent RNA helicase eIF4A (TIF1) from Lodderomyces elongisporus (strain ATCC 11503 / CBS 2605 / JCM 1781 / NBRC 1676 / NRRL YB-4239) (Yeast).